The chain runs to 562 residues: Vacuolar basic amino acid transporter 1 (562 aa).

At 1 to 30 (MQTLDETSNLLPPPEEAEAPPLEQKFHEYN) the chain is on the vacuolar side. The helical transmembrane segment at 31-51 (LALPKFPILFSLWLGSFLSSL) threads the bilayer. Residues 52-100 (DSTIVANIMNRVAEEFSESSKKQWIATSFLLTNTAFQPLYGKLSDITGR) are Cytoplasmic-facing. Residues 101–121 (KSALLTAQFFFGLGCLLTCFA) form a helical membrane-spanning segment. At 122–131 (RNVTEFSIAR) the chain is on the vacuolar side. N-linked (GlcNAc...) asparagine glycosylation is present at N123. The chain crosses the membrane as a helical span at residues 132 to 152 (AICGIGAGGLNAISSIAVSDI). Residues 153 to 166 (CTARERGVYQGYAN) lie on the Cytoplasmic side of the membrane. Residues 167-187 (IVFGFGQLLGAPLGGVFIETI) form a helical membrane-spanning segment. Topologically, residues 188–190 (GWR) are vacuolar. A helical transmembrane segment spans residues 191 to 211 (ALFGIQVPVIMLCSVLAIKNI). Residues 212–232 (NIKLFHVPPMKERYTLKNLSR) lie on the Cytoplasmic side of the membrane. A helical membrane pass occupies residues 233–253 (IDIFGSLSLVATISGVLFLCS). The Vacuolar segment spans residues 254-255 (SQ). Residues 256-276 (LNKLYLALFTIGSFIVFILVE) form a helical membrane-spanning segment. Residues 277 to 292 (RYYATEKILPFELLTR) lie on the Cytoplasmic side of the membrane. The chain crosses the membrane as a helical span at residues 293 to 313 (SFCLSSAVTVISSFVVFGEIF). Topologically, residues 314-331 (RSPIYLQLLQNISVTKTG) are vacuolar. N-linked (GlcNAc...) asparagine glycosylation occurs at N324. The helical transmembrane segment at 332-352 (LFLIFPSISVAVGSLVTGWVL) threads the bilayer. Residues 353 to 365 (RNTKINLAHCAYQ) lie on the Cytoplasmic side of the membrane. A helical membrane pass occupies residues 366–386 (IIFGGMIMQLLGLGLGYFLLS). At 387-419 (HLNPDYTIYDMLESITFRSNSIWWKLIYVFASV) the chain is on the vacuolar side. A helical membrane pass occupies residues 420 to 440 (LVSFGYACLLVATLVSIVFTV). Residues 441–448 (EKSQQGTM) are Cytoplasmic-facing. Residues 449-469 (TGVFYLWRSIGNVLGASLTLV) form a helical membrane-spanning segment. The Vacuolar portion of the chain corresponds to 470–528 (SYENSLSSMLWNYMFKTKRDDEYHFTKKQYYSLINDSSYLRGPNFPTDIFVRILDVYKK). N-linked (GlcNAc...) asparagine glycosylation is present at N504. Residues 529 to 549 (AFLISYIPNIALAAVGIVLSL) traverse the membrane as a helical segment. Residues 550–562 (YLVKHTYKRSSSS) are Cytoplasmic-facing.

This sequence belongs to the major facilitator superfamily.

It localises to the vacuole membrane. Transporter required for vacuolar uptake of at least histidine and lysine. This Saccharomyces cerevisiae (strain ATCC 204508 / S288c) (Baker's yeast) protein is Vacuolar basic amino acid transporter 1 (VBA1).